The chain runs to 391 residues: ATP phosphoribosyltransferase regulatory subunit (391 aa).

It belongs to the class-II aminoacyl-tRNA synthetase family. HisZ subfamily. As to quaternary structure, heteromultimer composed of HisG and HisZ subunits.

It is found in the cytoplasm. It participates in amino-acid biosynthesis; L-histidine biosynthesis; L-histidine from 5-phospho-alpha-D-ribose 1-diphosphate: step 1/9. In terms of biological role, required for the first step of histidine biosynthesis. May allow the feedback regulation of ATP phosphoribosyltransferase activity by histidine. This chain is ATP phosphoribosyltransferase regulatory subunit, found in Bacillus licheniformis (strain ATCC 14580 / DSM 13 / JCM 2505 / CCUG 7422 / NBRC 12200 / NCIMB 9375 / NCTC 10341 / NRRL NRS-1264 / Gibson 46).